A 182-amino-acid chain; its full sequence is Glutamyl-tRNA(Gln) amidotransferase subunit F, mitochondrial (182 aa).

Belongs to the GatF family. In terms of assembly, subunit of the heterotrimeric GatFAB amidotransferase (AdT) complex, composed of A, B and F subunits.

The protein localises to the mitochondrion inner membrane. The catalysed reaction is L-glutamyl-tRNA(Gln) + L-glutamine + ATP + H2O = L-glutaminyl-tRNA(Gln) + L-glutamate + ADP + phosphate + H(+). In terms of biological role, allows the formation of correctly charged Gln-tRNA(Gln) through the transamidation of misacylated Glu-tRNA(Gln) in the mitochondria. The reaction takes place in the presence of glutamine and ATP through an activated gamma-phospho-Glu-tRNA(Gln). Required for proper protein synthesis within the mitochondrion. The polypeptide is Glutamyl-tRNA(Gln) amidotransferase subunit F, mitochondrial (Candida tropicalis (strain ATCC MYA-3404 / T1) (Yeast)).